The chain runs to 445 residues: UPF0210 protein SPH_0352 (445 aa).

The protein belongs to the UPF0210 family. In terms of assembly, homodimer.

The polypeptide is UPF0210 protein SPH_0352 (Streptococcus pneumoniae (strain Hungary19A-6)).